The sequence spans 257 residues: Leucine-rich repeat-containing protein 3 (257 aa).

The first 32 residues, 1 to 32 (MGPRGRQSPSSPLAPSQGSCFFILFCLRLGAS), serve as a signal peptide directing secretion. Residues 33-64 (CPQSCQCPDHAGAVAVHCSSRGLQEIPRDIPA) enclose the LRRNT domain. LRR repeat units follow at residues 65–86 (NTVLLKLDANRISRVPNGAFQH), 89–110 (QLRELDLSHNAIEAIGPAAFSG), and 114–135 (GLRLLDLSHNRIRRIPKDALGK). An LRRCT domain is found at 145 to 198 (NPLHCECALQEALWELKLDPDSVDEIACHTSAQEQFVGKPLIQVLDSGASFCST). The chain crosses the membrane as a helical span at residues 205-225 (VAMLVTMFGWFTMVIAYVVYY).

It belongs to the LRRC3 family.

It localises to the membrane. The polypeptide is Leucine-rich repeat-containing protein 3 (Lrrc3) (Rattus norvegicus (Rat)).